Consider the following 186-residue polypeptide: Ribosome-recycling factor (186 aa).

The segment at 135–156 (DANDEVKKLQKDKAVSEDEGKK) is disordered.

This sequence belongs to the RRF family.

The protein localises to the cytoplasm. Functionally, responsible for the release of ribosomes from messenger RNA at the termination of protein biosynthesis. May increase the efficiency of translation by recycling ribosomes from one round of translation to another. The protein is Ribosome-recycling factor of Bdellovibrio bacteriovorus (strain ATCC 15356 / DSM 50701 / NCIMB 9529 / HD100).